The following is a 184-amino-acid chain: MSWRSESIWIEFITGSRKTSNFCWAFILFLGSLGFLLVGTSSYLGRNVISLFPSQQIIFFPQGIVMSFYGIAGLFISCYLWCTILWNVGSGYDLFDRKEGIVRIFRWGFPGKSRRIFLRFLMKDIQSIRIEVKEGVSARRVLYMEIRGQGAIPLIRTDENFTTREIEQKAAELAYFLRVPIEVF.

Helical transmembrane passes span 22 to 42 (FCWAFILFLGSLGFLLVGTSS) and 57 to 77 (IIFFPQGIVMSFYGIAGLFIS).

Belongs to the Ycf4 family.

It localises to the plastid. The protein localises to the chloroplast thylakoid membrane. Seems to be required for the assembly of the photosystem I complex. This is Photosystem I assembly protein Ycf4 from Lepidium virginicum (Virginia pepperweed).